The chain runs to 320 residues: Foldase protein PrsA (320 aa).

A signal peptide spans 1-20; the sequence is MKMINKLIVPVTASALLLGA. The N-palmitoyl cysteine moiety is linked to residue Cys21. Cys21 carries S-diacylglycerol cysteine lipidation. Positions 139-245 constitute a PpiC domain; the sequence is EDSKKASHIL…FGYHIIKADK (107 aa). The interval 159–198 is disordered; that stretch reads EGLDDKEAKQKAEEIQKEVSKDPSKFGEIAKKESMDTGSA.

The protein belongs to the PrsA family.

The protein localises to the cell membrane. It carries out the reaction [protein]-peptidylproline (omega=180) = [protein]-peptidylproline (omega=0). In terms of biological role, plays a major role in protein secretion by helping the post-translocational extracellular folding of several secreted proteins. The sequence is that of Foldase protein PrsA from Staphylococcus aureus (strain bovine RF122 / ET3-1).